Consider the following 1345-residue polypeptide: Probable membrane antigen 75 (1345 aa).

Its subcellular location is the virion tegument. The protein is Probable membrane antigen 75 (75) of Equine herpesvirus 2 (strain 86/87) (EHV-2).